Consider the following 102-residue polypeptide: Large ribosomal subunit protein bL21 (102 aa).

The protein belongs to the bacterial ribosomal protein bL21 family. In terms of assembly, part of the 50S ribosomal subunit. Contacts protein L20.

This protein binds to 23S rRNA in the presence of protein L20. This chain is Large ribosomal subunit protein bL21, found in Lachnospira eligens (strain ATCC 27750 / DSM 3376 / VPI C15-48 / C15-B4) (Eubacterium eligens).